The chain runs to 559 residues: Tectonic-like complex member MKS1 (559 aa).

One can recognise a C2 B9-type domain in the interval 311-439; that stretch reads LRLFVNGEVV…TVSTWRPVEL (129 aa).

Part of the tectonic-like complex (also named B9 complex). Interacts with TMEM107. Interacts with TCTN3, AHI1, TCTN1, TCTN2, CC2D2A. Interacts with FLNA. Interacts with TMEM67. Interacts with B9D1 and B9D2.

The protein localises to the cytoplasm. It localises to the cytoskeleton. It is found in the cilium basal body. The protein resides in the microtubule organizing center. Its subcellular location is the centrosome. In terms of biological role, component of the tectonic-like complex, a complex localized at the transition zone of primary cilia and acting as a barrier that prevents diffusion of transmembrane proteins between the cilia and plasma membranes. Involved in centrosome migration to the apical cell surface during early ciliogenesis. Required for ciliary structure and function, including a role in regulating length and appropriate number through modulating centrosome duplication. Required for cell branching morphology. This chain is Tectonic-like complex member MKS1 (MKS1), found in Homo sapiens (Human).